We begin with the raw amino-acid sequence, 123 residues long: Pre-B lymphocyte protein 3 (123 aa).

Residues 1-20 (MACRCLSFLLMGTFLSVSQT) form the signal peptide. An Ig-like domain is found at 21-123 (VLAQLDALLV…YCSVGYGFSP (103 aa)). Cysteine 40 and cysteine 115 are oxidised to a cystine.

This sequence belongs to the immunoglobulin superfamily. Expressed in B-cell precursors. Expressed in fetal liver, bone marrow, spleen and lymph node.

Associates with the Ig-mu chain to form a molecular complex that is expressed on the surface of pre-B-cells. The sequence is that of Pre-B lymphocyte protein 3 (VPREB3) from Homo sapiens (Human).